A 79-amino-acid polypeptide reads, in one-letter code: Small ribosomal subunit protein uS17 (79 aa).

It belongs to the universal ribosomal protein uS17 family. As to quaternary structure, part of the 30S ribosomal subunit.

In terms of biological role, one of the primary rRNA binding proteins, it binds specifically to the 5'-end of 16S ribosomal RNA. In Caulobacter vibrioides (strain NA1000 / CB15N) (Caulobacter crescentus), this protein is Small ribosomal subunit protein uS17.